The sequence spans 824 residues: Glycerol-3-phosphate acyltransferase (824 aa).

The short motif at cysteine 302–methionine 307 is the HXXXXD motif element.

The protein belongs to the GPAT/DAPAT family.

The protein localises to the cell inner membrane. The enzyme catalyses sn-glycerol 3-phosphate + an acyl-CoA = a 1-acyl-sn-glycero-3-phosphate + CoA. It participates in phospholipid metabolism; CDP-diacylglycerol biosynthesis; CDP-diacylglycerol from sn-glycerol 3-phosphate: step 1/3. The protein is Glycerol-3-phosphate acyltransferase of Actinobacillus pleuropneumoniae serotype 5b (strain L20).